We begin with the raw amino-acid sequence, 568 residues long: 2-succinyl-5-enolpyruvyl-6-hydroxy-3-cyclohexene-1-carboxylate synthase (568 aa).

It belongs to the TPP enzyme family. MenD subfamily. As to quaternary structure, homodimer. Mg(2+) serves as cofactor. Requires Mn(2+) as cofactor. It depends on thiamine diphosphate as a cofactor.

The catalysed reaction is isochorismate + 2-oxoglutarate + H(+) = 5-enolpyruvoyl-6-hydroxy-2-succinyl-cyclohex-3-ene-1-carboxylate + CO2. It functions in the pathway quinol/quinone metabolism; 1,4-dihydroxy-2-naphthoate biosynthesis; 1,4-dihydroxy-2-naphthoate from chorismate: step 2/7. The protein operates within quinol/quinone metabolism; menaquinone biosynthesis. Catalyzes the thiamine diphosphate-dependent decarboxylation of 2-oxoglutarate and the subsequent addition of the resulting succinic semialdehyde-thiamine pyrophosphate anion to isochorismate to yield 2-succinyl-5-enolpyruvyl-6-hydroxy-3-cyclohexene-1-carboxylate (SEPHCHC). The sequence is that of 2-succinyl-5-enolpyruvyl-6-hydroxy-3-cyclohexene-1-carboxylate synthase from Actinobacillus pleuropneumoniae serotype 5b (strain L20).